Here is a 586-residue protein sequence, read N- to C-terminus: Proteasome-associated ATPase (586 aa).

The stretch at Ala-11 to Gln-76 forms a coiled coil. Gly-273 to Leu-278 contacts ATP. The docks into pockets in the proteasome alpha-ring stretch occupies residues Tyr-585 to Leu-586.

This sequence belongs to the AAA ATPase family. In terms of assembly, homohexamer. Assembles into a hexameric ring structure that caps the 20S proteasome core. Strongly interacts with the prokaryotic ubiquitin-like protein Pup through a hydrophobic interface; the interacting region of ARC lies in its N-terminal coiled-coil domain. There is one Pup binding site per ARC hexamer ring. Upon ATP-binding, the C-terminus of ARC interacts with the alpha-rings of the proteasome core, possibly by binding to the intersubunit pockets.

It functions in the pathway protein degradation; proteasomal Pup-dependent pathway. In terms of biological role, ATPase which is responsible for recognizing, binding, unfolding and translocation of pupylated proteins into the bacterial 20S proteasome core particle. May be essential for opening the gate of the 20S proteasome via an interaction with its C-terminus, thereby allowing substrate entry and access to the site of proteolysis. Thus, the C-termini of the proteasomal ATPase may function like a 'key in a lock' to induce gate opening and therefore regulate proteolysis. In Nocardia farcinica (strain IFM 10152), this protein is Proteasome-associated ATPase.